A 364-amino-acid polypeptide reads, in one-letter code: tRNA-specific 2-thiouridylase MnmA (364 aa).

ATP is bound by residues 12 to 19 (GMSGGVDS) and Met38. Residues 98-100 (NPD) are interaction with target base in tRNA. The active-site Nucleophile is the Cys103. Cys103 and Cys199 are disulfide-bonded. Residue Gly127 coordinates ATP. Positions 149–151 (KDQ) are interaction with tRNA. The active-site Cysteine persulfide intermediate is the Cys199. Residues 307–308 (RY) form an interaction with tRNA region.

It belongs to the MnmA/TRMU family.

The protein localises to the cytoplasm. It carries out the reaction S-sulfanyl-L-cysteinyl-[protein] + uridine(34) in tRNA + AH2 + ATP = 2-thiouridine(34) in tRNA + L-cysteinyl-[protein] + A + AMP + diphosphate + H(+). In terms of biological role, catalyzes the 2-thiolation of uridine at the wobble position (U34) of tRNA, leading to the formation of s(2)U34. This is tRNA-specific 2-thiouridylase MnmA from Shouchella clausii (strain KSM-K16) (Alkalihalobacillus clausii).